The following is a 412-amino-acid chain: Non-specific lipid-transfer protein-like 2 (412 aa).

Residues 410 to 412 (SKI) carry the Microbody targeting signal motif.

It belongs to the thiolase-like superfamily. Thiolase family. As to expression, expressed in intestine, hypodermis and body-wall muscle.

It is found in the peroxisome. It catalyses the reaction choloyl-CoA + propanoyl-CoA = 3alpha,7alpha,12alpha-trihydroxy-24-oxo-5beta-cholestan-26-oyl-CoA + CoA. Inhibited by acetyl-CoA. Its function is as follows. Catalyzes the thiolytic cleavage of 3-ketoacyl-CoA with 8-16 carbon residues in the acyl group using a ping-pong mechanism whereby binding to 3-ketooctanoyl-CoA results in the release of acetyl-CoA and the subsequent addition of CoA produces 3-ketohexanohyl-CoA. Involved in the biosynthesis of the dauer pheromone by providing short chains of fatty acid that are attached to the ascarylose sugars of the pheromone. The polypeptide is Non-specific lipid-transfer protein-like 2 (Caenorhabditis elegans).